The chain runs to 398 residues: Small ribosomal subunit protein mS78 (rPPR3a) (398 aa).

Residues 1-19 constitute a mitochondrion transit peptide; sequence MSSLSRVLRGTFNTCPIRR. PPR repeat units follow at residues 108–142, 143–173, 179–213, 214–248, 249–283, 284–318, and 319–353; these read KEGFAARIISLYGKAGMFENAQKVFEEMPNRDCKR, SVLSFNALLSAYRLSKKFDVVEELFNELPGK, DIVSYNTLIKALCEKDSLPEAVALLDEIENKGLKP, DIVTFNTLLLSSYLKGQFELGEEIWAKMVEKNVAI, DIRTYNARLLGLANEAKSKELVNLFGELKASGLKP, DVFSFNAMIRGSINEGKMDEAEAWYKEIVKHGYRP, and DKATFALLLPAMCKAGDFESAIELFKETFSKRYLV.

Belongs to the PPR family. P subfamily. Component of the mitochondrial ribosome small subunit.

The protein resides in the mitochondrion. In Arabidopsis thaliana (Mouse-ear cress), this protein is Small ribosomal subunit protein mS78 (rPPR3a).